A 216-amino-acid polypeptide reads, in one-letter code: Large ribosomal subunit protein uL1B (216 aa).

Ser11 bears the Phosphoserine mark.

Belongs to the universal ribosomal protein uL1 family. As to quaternary structure, component of the large ribosomal subunit (LSU). Mature yeast ribosomes consist of a small (40S) and a large (60S) subunit. The 40S small subunit contains 1 molecule of ribosomal RNA (18S rRNA) and at least 33 different proteins. The large 60S subunit contains 3 rRNA molecules (25S, 5.8S and 5S rRNA) and at least 46 different proteins. uL1 forms part of the L1 stalk.

Its subcellular location is the cytoplasm. Component of the ribosome, a large ribonucleoprotein complex responsible for the synthesis of proteins in the cell. The small ribosomal subunit (SSU) binds messenger RNAs (mRNAs) and translates the encoded message by selecting cognate aminoacyl-transfer RNA (tRNA) molecules. The large subunit (LSU) contains the ribosomal catalytic site termed the peptidyl transferase center (PTC), which catalyzes the formation of peptide bonds, thereby polymerizing the amino acids delivered by tRNAs into a polypeptide chain. The nascent polypeptides leave the ribosome through a tunnel in the LSU and interact with protein factors that function in enzymatic processing, targeting, and the membrane insertion of nascent chains at the exit of the ribosomal tunnel. uL1 forms part of the L1 stalk, a mobile element that plays a role in evacuating the exit-site tRNA. The sequence is that of Large ribosomal subunit protein uL1B (rpl101) from Schizosaccharomyces pombe (strain 972 / ATCC 24843) (Fission yeast).